The sequence spans 672 residues: Methionine--tRNA ligase (672 aa).

Positions 12-22 (AYTNGPLHLGH) match the 'HIGH' region motif. Zn(2+) contacts are provided by C144, C147, C156, and C159. The 'KMSKS' region signature appears at 330–334 (KMSTS). T333 contacts ATP. In terms of domain architecture, tRNA-binding spans 573-672 (DFAKIELKVA…KDLPVGSTIC (100 aa)).

The protein belongs to the class-I aminoacyl-tRNA synthetase family. MetG type 1 subfamily. As to quaternary structure, homodimer. The cofactor is Zn(2+).

It is found in the cytoplasm. It carries out the reaction tRNA(Met) + L-methionine + ATP = L-methionyl-tRNA(Met) + AMP + diphosphate. Its function is as follows. Is required not only for elongation of protein synthesis but also for the initiation of all mRNA translation through initiator tRNA(fMet) aminoacylation. This is Methionine--tRNA ligase from Methanococcus aeolicus (strain ATCC BAA-1280 / DSM 17508 / OCM 812 / Nankai-3).